A 366-amino-acid polypeptide reads, in one-letter code: Peptide chain release factor 2 (366 aa).

Gln-249 carries the N5-methylglutamine modification.

The protein belongs to the prokaryotic/mitochondrial release factor family. Methylated by PrmC. Methylation increases the termination efficiency of RF2.

The protein resides in the cytoplasm. Peptide chain release factor 2 directs the termination of translation in response to the peptide chain termination codons UGA and UAA. The chain is Peptide chain release factor 2 from Petrotoga mobilis (strain DSM 10674 / SJ95).